A 447-amino-acid chain; its full sequence is NADH-ubiquinone oxidoreductase chain 4 (447 aa).

The next 13 membrane-spanning stretches (helical) occupy residues 4 to 24 (LLLL…FMLF), 34 to 54 (LIIG…LNWI), 67 to 87 (MYSY…FISL), 100 to 120 (LLMI…FYLF), 149 to 169 (MFYT…IYLI), 189 to 209 (LFIY…FHGW), 223 to 243 (MILA…LMII), 248 to 268 (FILI…ILSL), 279 to 299 (IIAI…MTFL), 304 to 324 (IGGY…FFLV), 349 to 371 (MSLL…NLIS), 388 to 408 (LILM…FMFI), and 422 to 442 (GILV…LMFL).

The protein belongs to the complex I subunit 4 family.

The protein resides in the mitochondrion membrane. The catalysed reaction is a ubiquinone + NADH + 5 H(+)(in) = a ubiquinol + NAD(+) + 4 H(+)(out). In terms of biological role, core subunit of the mitochondrial membrane respiratory chain NADH dehydrogenase (Complex I) that is believed to belong to the minimal assembly required for catalysis. Complex I functions in the transfer of electrons from NADH to the respiratory chain. The immediate electron acceptor for the enzyme is believed to be ubiquinone. The chain is NADH-ubiquinone oxidoreductase chain 4 (ND4) from Apis mellifera ligustica (Common honeybee).